Here is a 143-residue protein sequence, read N- to C-terminus: Large ribosomal subunit protein uL15 (143 aa).

It belongs to the universal ribosomal protein uL15 family. In terms of assembly, part of the 50S ribosomal subunit.

Functionally, binds to the 23S rRNA. This Methanococcus aeolicus (strain ATCC BAA-1280 / DSM 17508 / OCM 812 / Nankai-3) protein is Large ribosomal subunit protein uL15.